The sequence spans 212 residues: Thymidylate kinase (212 aa).

10–17 contributes to the ATP binding site; sequence GIDGCGKT.

This sequence belongs to the thymidylate kinase family.

It catalyses the reaction dTMP + ATP = dTDP + ADP. Phosphorylation of dTMP to form dTDP in both de novo and salvage pathways of dTTP synthesis. The chain is Thymidylate kinase from Prochlorococcus marinus (strain MIT 9301).